The sequence spans 123 residues: UPF0102 protein PputW619_0932 (123 aa).

Belongs to the UPF0102 family.

The chain is UPF0102 protein PputW619_0932 from Pseudomonas putida (strain W619).